The primary structure comprises 1041 residues: Toll-like receptor 8 (1041 aa).

The first 26 residues, 1–26 (MENMFLQSSMLTCIFLLISGSCELCA), serve as a signal peptide directing secretion. Residues 27 to 827 (EENFSRSYPC…ELTTCVSDVT (801 aa)) lie on the Extracellular side of the membrane. N-linked (GlcNAc...) asparagine glycans are attached at residues N29, N42, N80, N88, and N115. The cysteines at positions 36 and 49 are disulfide-linked. LRR repeat units lie at residues 126–147 (NLRE…LPES), 148–168 (LTEL…GISR), 171–193 (NLKN…TNIE), 202–223 (NLEL…LPSS), 224–244 (LRKL…DFKG), and 247–268 (NLTL…FPCV). N160 carries an N-linked (GlcNAc...) asparagine glycan. An intrachain disulfide couples C181 to C187. N247 carries an N-linked (GlcNAc...) asparagine glycan. Intrachain disulfides connect C257-C270 and C260-C267. N-linked (GlcNAc...) asparagine glycans are attached at residues N285 and N293. 3 LRR repeats span residues 288–309 (QLRY…WFKN), 312–334 (HLKV…AFLT), and 338–360 (RLEI…INIS). N358 and N362 each carry an N-linked (GlcNAc...) asparagine glycan. 3 LRR repeats span residues 368–389 (SLRA…DFQP), 395–416 (NLST…LFQN), and 419–440 (NLEI…TRQS). N395 and N416 each carry an N-linked (GlcNAc...) asparagine glycan. A glycan (N-linked (GlcNAc...) asparagine) is linked at N443. C479 and C509 are disulfide-bonded. LRR repeat units follow at residues 482–503 (YGKA…QFEN), 506–527 (DIAC…TEFS), 531–551 (HVKY…SALT), and 555–577 (DLEV…THHL). N511 and N546 each carry an N-linked (GlcNAc...) asparagine glycan. N-linked (GlcNAc...) asparagine glycans are attached at residues N582 and N590. LRR repeat units follow at residues 585–606 (NLKV…YNLE), 609–630 (SLVE…DDNR), 640–661 (NLTR…AFLN), 665–685 (SLTE…TLLQ), 689–710 (RLEL…LSDF), 713–734 (SLRT…FLSE), and 737–758 (SLKH…ALET). Residues N640 and N680 are each glycosylated (N-linked (GlcNAc...) asparagine). N752 is a glycosylation site (N-linked (GlcNAc...) asparagine). In terms of domain architecture, LRRCT spans 772 to 824 (NPFECTCDIGDFRRWMDEHLNVKIPRLVDVICASPGDQRGKSIVSLELTTCVS). Cysteines 776 and 803 form a disulfide. A helical transmembrane segment spans residues 828–848 (AVILFFFTFFITTMVMLAALA). At 849–1041 (HHLFYWDVWF…NMYVDSIKQY (193 aa)) the chain is on the cytoplasmic side. The 145-residue stretch at 878-1022 (TFYDAYISYD…LFWQTLRNVV (145 aa)) folds into the TIR domain.

The protein belongs to the Toll-like receptor family. In terms of assembly, homodimer. Interacts with MYD88 via their respective TIR domains. Interacts with UNC93B1. Interacts with BTK. Interacts with SMPDL3B. Post-translationally, ubiquitinated by RNF216; leading to degradation by the proteasome. In terms of processing, proteolytic processing occurs in monocytes and monocyte-derived macrophages by both furin-like proprotein convertase and cathepsins. The cleavage is necessary for dimer formation and subsequent activation. Expressed in myeloid dendritic cells, monocytes, and monocyte-derived dendritic cells.

The protein localises to the endosome membrane. Activated by RNAs having enough uridines. Functionally, endosomal receptor that plays a key role in innate and adaptive immunity. Controls host immune response against pathogens through recognition of RNA degradation products specific to microorganisms that are initially processed by RNASET2. Recognizes GU-rich single-stranded RNA (GU-rich RNA) derived from SARS-CoV-2, SARS-CoV-1 and HIV-1 viruses. Upon binding to agonists, undergoes dimerization that brings TIR domains from the two molecules into direct contact, leading to the recruitment of TIR-containing downstream adapter MYD88 through homotypic interaction. In turn, the Myddosome signaling complex is formed involving IRAK4, IRAK1, TRAF6, TRAF3 leading to activation of downstream transcription factors NF-kappa-B and IRF7 to induce pro-inflammatory cytokines and interferons, respectively. The polypeptide is Toll-like receptor 8 (Homo sapiens (Human)).